The sequence spans 481 residues: RuvB-like helicase 2 (481 aa).

Glycine 76–threonine 83 contacts ATP.

The protein belongs to the RuvB family. In terms of assembly, may form heterododecamers with hel-1/rvb1. Component of the SWR1 chromatin remodeling complex, the INO80 chromatin remodeling complex, and of the R2TP complex.

It localises to the nucleus. It catalyses the reaction ATP + H2O = ADP + phosphate + H(+). DNA helicase which participates in several chromatin remodeling complexes, including the SWR1 and the INO80 complexes. The SWR1 complex mediates the ATP-dependent exchange of histone H2A for the H2A variant H2A.Z leading to transcriptional regulation of selected genes by chromatin remodeling. The INO80 complex remodels chromatin by shifting nucleosomes and is involved in DNA repair. Also involved in pre-rRNA processing. This chain is RuvB-like helicase 2 (hel-2), found in Neurospora crassa (strain ATCC 24698 / 74-OR23-1A / CBS 708.71 / DSM 1257 / FGSC 987).